The following is a 20-amino-acid chain: Methyl-coenzyme M reductase subunit gamma (20 aa).

A disordered region spans residues 1–20 (AYERQFYPGATSVAENNIGH).

This sequence belongs to the methyl-coenzyme M reductase gamma subunit family. As to quaternary structure, MCR from M.thermophila is a heterotrimer composed of an alpha, a beta, and a gamma subunit. Coenzyme F430 serves as cofactor.

The protein localises to the cytoplasm. The catalysed reaction is coenzyme B + methyl-coenzyme M = methane + coenzyme M-coenzyme B heterodisulfide. It participates in one-carbon metabolism; methyl-coenzyme M reduction; methane from methyl-coenzyme M: step 1/1. Functionally, component of the methyl-coenzyme M reductase (MCR) I that catalyzes the reductive cleavage of methyl-coenzyme M (CoM-S-CH3 or 2-(methylthio)ethanesulfonate) using coenzyme B (CoB or 7-mercaptoheptanoylthreonine phosphate) as reductant which results in the production of methane and the mixed heterodisulfide of CoB and CoM (CoM-S-S-CoB). This is the final step in methanogenesis. The sequence is that of Methyl-coenzyme M reductase subunit gamma from Methanosarcina thermophila.